The primary structure comprises 351 residues: Photosystem II D2 protein (351 aa).

Residues 39-59 form a helical membrane-spanning segment; that stretch reads CSYLALGAWFTGTTFVTSWYT. H116 is a chlorophyll a binding site. Residues 123–139 form a helical membrane-spanning segment; sequence GFCLRQFEIARLVGLRP. Q128 and N141 together coordinate pheophytin a. The helical transmembrane segment at 151–164 threads the bilayer; sequence VFVSVFLLYPLGQA. Residue H196 coordinates chlorophyll a. The helical transmembrane segment at 206-226 threads the bilayer; sequence GALLCAIHGATVQNTLFEDGE. Positions 213 and 260 each coordinate a plastoquinone. H213 provides a ligand contact to Fe cation. H267 is a binding site for Fe cation. The helical transmembrane segment at 277 to 293 threads the bilayer; the sequence is GLWASSIGIVGLALNLR.

It belongs to the reaction center PufL/M/PsbA/D family. PSII is composed of 1 copy each of membrane proteins PsbA, PsbB, PsbC, PsbD, PsbE, PsbF, PsbH, PsbI, PsbJ, PsbK, PsbL, PsbM, PsbT, PsbX, PsbY, PsbZ, Psb30/Ycf12, at least 3 peripheral proteins of the oxygen-evolving complex and a large number of cofactors. It forms dimeric complexes. The D1/D2 heterodimer binds P680, chlorophylls that are the primary electron donor of PSII, and subsequent electron acceptors. It shares a non-heme iron and each subunit binds pheophytin, quinone, additional chlorophylls, carotenoids and lipids. There is also a Cl(-1) ion associated with D1 and D2, which is required for oxygen evolution. The PSII complex binds additional chlorophylls, carotenoids and specific lipids. serves as cofactor.

It localises to the plastid. It is found in the chloroplast thylakoid membrane. The enzyme catalyses 2 a plastoquinone + 4 hnu + 2 H2O = 2 a plastoquinol + O2. Functionally, photosystem II (PSII) is a light-driven water:plastoquinone oxidoreductase that uses light energy to abstract electrons from H(2)O, generating O(2) and a proton gradient subsequently used for ATP formation. It consists of a core antenna complex that captures photons, and an electron transfer chain that converts photonic excitation into a charge separation. The D1/D2 (PsbA/PsbD) reaction center heterodimer binds P680, the primary electron donor of PSII as well as several subsequent electron acceptors. D2 is needed for assembly of a stable PSII complex. This Cyanidioschyzon merolae (strain NIES-3377 / 10D) (Unicellular red alga) protein is Photosystem II D2 protein.